Consider the following 71-residue polypeptide: UPF0435 protein SERP1418 (71 aa).

The protein belongs to the UPF0435 family.

The protein is UPF0435 protein SERP1418 of Staphylococcus epidermidis (strain ATCC 35984 / DSM 28319 / BCRC 17069 / CCUG 31568 / BM 3577 / RP62A).